Reading from the N-terminus, the 375-residue chain is tRNA(Met) cytidine acetate ligase (375 aa).

ATP-binding positions include 7–20, Gly-101, Asn-151, and Arg-176; that span reads VVEY…HRYH.

Belongs to the TmcAL family.

It localises to the cytoplasm. The enzyme catalyses cytidine(34) in elongator tRNA(Met) + acetate + ATP = N(4)-acetylcytidine(34) in elongator tRNA(Met) + AMP + diphosphate. Catalyzes the formation of N(4)-acetylcytidine (ac(4)C) at the wobble position of elongator tRNA(Met), using acetate and ATP as substrates. First activates an acetate ion to form acetyladenylate (Ac-AMP) and then transfers the acetyl group to tRNA to form ac(4)C34. The protein is tRNA(Met) cytidine acetate ligase of Limosilactobacillus fermentum (strain NBRC 3956 / LMG 18251) (Lactobacillus fermentum).